We begin with the raw amino-acid sequence, 7081 residues long: Leucine-rich repeat transmembrane protein CCDC168 (7081 aa).

The helical transmembrane segment at 37 to 57 threads the bilayer; it reads WVAIFFIILLGIIFEIILMKA. LRR repeat units lie at residues 233–256 and 420–445; these read PCPL…VRNQ and NAEF…SVKA. The tract at residues 717 to 745 is disordered; it reads EDLQSSENSHLQLSNGEELPTSTPKTQRC. Polar residues predominate over residues 718 to 742; sequence DLQSSENSHLQLSNGEELPTSTPKT. The LRR 3 repeat unit spans residues 865–890; that stretch reads ADTLRIIRLSHSASKQEKLPDEKETQ. Residues 943–1009 form a disordered region; it reads QISSGSSKAP…DPKNPLTMPE (67 aa). Positions 958-970 are enriched in polar residues; it reads VQPQTLSTQTILE. Residues 981–999 are compositionally biased toward basic and acidic residues; that stretch reads QVEKVKQSTDRPTDRESAG. The stretch at 1050-1075 is one LRR 4 repeat; that stretch reads LPAVALGSFNNHLLTLPYFKRQEIKK. 2 stretches are compositionally biased toward polar residues: residues 1274-1286 and 1295-1304; these read KCTA…SPIS and LNQTRESYIP. Residues 1274-1304 are disordered; the sequence is KCTADSETPSPISGKSLIGDPLNQTRESYIP. The LRR 5 repeat unit spans residues 1501–1527; sequence NCLTLELHINGQRLQHQTGFEQTTLET. Composition is skewed to basic and acidic residues over residues 1773–1784 and 1793–1804; these read ETEKDTLREKRL and TSPHEDSITSRD. Disordered stretches follow at residues 1773 to 1804, 1954 to 1973, 2008 to 2031, and 2083 to 2103; these read ETEK…TSRD, KSPH…ESGS, STHQ…EGRS, and TGKS…NPRR. The segment covering 1964–1973 has biased composition (polar residues); the sequence is ANLTDMESGS. One copy of the LRR 6 repeat lies at 2373 to 2397; it reads KNQINTIQLSERKIILNPKCLTMKE. Residues 2637–2680 are disordered; sequence GRHSPASEEMKRQNGRLKMADRSSPQGRPLQAKQSAVSQSPDTA. Residues 2668-2678 are compositionally biased toward polar residues; the sequence is AKQSAVSQSPD. LRR repeat units follow at residues 2727–2749, 2832–2855, 2862–2889, 3433–3458, and 3630–3653; these read SKIH…KTRA, IQQQ…VYDS, IKKL…KLEK, LSSR…RLEW, and ILSL…NVKS. The segment at 3730–3756 is disordered; the sequence is SLSHSNSNSRTKAGKDKSGTLKGCLPP. An LRR 12 repeat occupies 3875 to 3898; the sequence is MRGITRFCLSSSTQQELSDTMEKC. 8 disordered regions span residues 4119 to 4260, 4293 to 4428, 4729 to 4756, 4794 to 4817, 4831 to 4859, 4928 to 4955, 4966 to 4985, and 5191 to 5212; these read ELSH…DGDK, QGII…KQET, QESL…LLPQ, SPLS…QDRT, MPSL…RLAN, GVQE…YLNC, LGKT…SDSG, and QKVK…SPLH. 6 stretches are compositionally biased toward basic and acidic residues: residues 4121 to 4133, 4147 to 4176, 4192 to 4245, 4329 to 4361, 4375 to 4401, and 4415 to 4426; these read SHQK…EKAD, KAKD…DKGL, EPGK…EQQK, QKAK…DLKG, EPGK…NRDG, and EQEKRDGHKSKQ. A compositionally biased stretch (polar residues) spans 4731–4743; it reads SLPSRQTAPTKPT. Basic and acidic residues-rich tracts occupy residues 4746–4756 and 4798–4817; these read LVKKEKQLLPQ and KRKE…QDRT. A compositionally biased stretch (polar residues) spans 5203–5212; that stretch reads KSPSRSSPLH. Residues 5311–5336 form an LRR 13 repeat; that stretch reads LSQLELDKETHLGNEMLRLKRPILRR. The segment at 5467–5496 is disordered; it reads LPDTEKTADAEARSGDVRKGKPHRSQKENR. A compositionally biased stretch (basic and acidic residues) spans 5469-5496; it reads DTEKTADAEARSGDVRKGKPHRSQKENR. The LRR 14 repeat unit spans residues 5522-5545; the sequence is LNAKELVLNINKLEKKVHKDKDEA. Disordered stretches follow at residues 5564 to 5583 and 5763 to 5792; these read LDSG…SSCP and QQET…SNDR. Residues 5779–5792 are compositionally biased toward basic and acidic residues; that stretch reads KFDKPKEDGQSNDR. LRR repeat units follow at residues 5901–5924, 6259–6282, 6419–6442, 6552–6575, and 6613–6637; these read KQAL…LFPP, PDLR…ECPS, HLES…SLQM, HFSV…SYAM, and QIDL…TFPK. 2 disordered regions span residues 6859–6878 and 6916–6950; these read CKSH…SPDW and APLT…RSDL. The span at 6860-6871 shows a compositional bias: basic residues; sequence KSHKSRKYRSSS. The span at 6937–6950 shows a compositional bias: basic and acidic residues; it reads HPESQERKKARSDL. The stretch at 7012-7036 is one LRR 20 repeat; it reads NRPFFFACVPADSLEVIPKTIRWTI.

The protein resides in the membrane. This chain is Leucine-rich repeat transmembrane protein CCDC168, found in Homo sapiens (Human).